The chain runs to 233 residues: 7-cyano-7-deazaguanine synthase 2 (233 aa).

An ATP-binding site is contributed by 8–18 (LSGGLDSTTCM). Residues C186, C194, C197, and C200 each contribute to the Zn(2+) site.

It belongs to the QueC family. Homodimer. Requires Zn(2+) as cofactor.

The catalysed reaction is 7-carboxy-7-deazaguanine + NH4(+) + ATP = 7-cyano-7-deazaguanine + ADP + phosphate + H2O + H(+). It participates in purine metabolism; 7-cyano-7-deazaguanine biosynthesis. In terms of biological role, catalyzes the ATP-dependent conversion of 7-carboxy-7-deazaguanine (CDG) to 7-cyano-7-deazaguanine (preQ(0)). This is 7-cyano-7-deazaguanine synthase 2 from Desulfitobacterium hafniense (strain Y51).